A 118-amino-acid polypeptide reads, in one-letter code: Small ribosomal subunit protein uS13 (118 aa).

A disordered region spans residues 94–118 (SLPLRGQRTKTNARTRKGPRKPIKK).

This sequence belongs to the universal ribosomal protein uS13 family. As to quaternary structure, part of the 30S ribosomal subunit. Forms a loose heterodimer with protein S19. Forms two bridges to the 50S subunit in the 70S ribosome.

Located at the top of the head of the 30S subunit, it contacts several helices of the 16S rRNA. In the 70S ribosome it contacts the 23S rRNA (bridge B1a) and protein L5 of the 50S subunit (bridge B1b), connecting the 2 subunits; these bridges are implicated in subunit movement. Contacts the tRNAs in the A and P-sites. The chain is Small ribosomal subunit protein uS13 from Vibrio cholerae serotype O1 (strain ATCC 39315 / El Tor Inaba N16961).